We begin with the raw amino-acid sequence, 171 residues long: Protein phosphatase 1 regulatory subunit 1A (171 aa).

Met1 is modified (N-acetylmethionine). Residues Met1–Val171 are disordered. An essential for activity region spans residues Lys9–Phe12. Residues Pro19–Ile29 are compositionally biased toward basic and acidic residues. Thr35 is subject to Phosphothreonine; by PKA. The segment at Thr42–Arg54 is essential for activity. Phosphoserine is present on residues Ser43, Ser46, Ser47, and Ser67. Over residues Lys135–Ser157 the composition is skewed to basic and acidic residues. The interval Thr143–Val171 is interaction with PPP1R15A.

Belongs to the protein phosphatase inhibitor 1 family. In terms of assembly, interacts with PPP1R15A. In terms of processing, phosphorylation of Thr-35 is required for activity.

Inhibitor of protein-phosphatase 1. This protein may be important in hormonal control of glycogen metabolism. Hormones that elevate intracellular cAMP increase I-1 activity in many tissues. I-1 activation may impose cAMP control over proteins that are not directly phosphorylated by PKA. Following a rise in intracellular calcium, I-1 is inactivated by calcineurin (or PP2B). Does not inhibit type-2 phosphatases. The sequence is that of Protein phosphatase 1 regulatory subunit 1A (PPP1R1A) from Homo sapiens (Human).